Reading from the N-terminus, the 509-residue chain is Proline-rich receptor-like protein kinase PERK15 (509 aa).

The interval 1-44 is disordered; sequence MSTDTIPSLSSPPAPEFPSTTPDTATSPAPSQPSIIGPSSLAPF. Residues 1–61 lie on the Extracellular side of the membrane; the sequence is MSTDTIPSLS…DGGSRNVALT (61 aa). The segment covering 18–34 has biased composition (low complexity); sequence PSTTPDTATSPAPSQPS. Residues 62–82 form a helical membrane-spanning segment; it reads GLITGVVLGATFVLLGVCIFV. Topologically, residues 83-509 are cytoplasmic; that stretch reads CFYKRKKRKL…IEPEKNTKDT (427 aa). Threonine 132 carries the post-translational modification Phosphothreonine. In terms of domain architecture, Protein kinase spans 143–423; that stretch reads FSNTNLLGQG…VRAFEGNISI (281 aa). Residues 149 to 157 and lysine 171 each bind ATP; that span reads LGQGGFGYV. At tyrosine 216 the chain carries Phosphotyrosine. Catalysis depends on aspartate 267, which acts as the Proton acceptor. Residue serine 300 is modified to Phosphoserine. Phosphothreonine occurs at positions 301 and 306. A Phosphotyrosine modification is found at tyrosine 314. Residues 468-499 are compositionally biased toward polar residues; that stretch reads FGSSECSGLTSDNGQNPSGSSSITEGQRTTQE. The disordered stretch occupies residues 468-509; it reads FGSSECSGLTSDNGQNPSGSSSITEGQRTTQEIEPEKNTKDT.

The protein belongs to the protein kinase superfamily. Ser/Thr protein kinase family. As to expression, mostly expressed in inflorescence bolts, and, to a lower extent, in flower buds and siliques.

The protein localises to the cell membrane. It carries out the reaction L-seryl-[protein] + ATP = O-phospho-L-seryl-[protein] + ADP + H(+). The enzyme catalyses L-threonyl-[protein] + ATP = O-phospho-L-threonyl-[protein] + ADP + H(+). In Arabidopsis thaliana (Mouse-ear cress), this protein is Proline-rich receptor-like protein kinase PERK15 (PERK15).